We begin with the raw amino-acid sequence, 556 residues long: MSVSAFNRRWAAVILEALTRHGVRHVCIAPGSRSTPLTLAAAENPAFIHHTHFDERGLGHLALGLAKVSQQPVAVIVTSGTAVANLYPALIEAGLTGEKLILLTADRPPELIDCGANQAIRQAGMFASHPSQTLSLPRPTQDIPARWLVSTIDNALAMLHAGALHINCPFAEPLYGDMNDTGLVWQQRLGDWWQDEKPWLREARRLASDKQRDWFFWRQKRGVVVAGRMSAEEGKKVAQWAQTLGWPLIGDVLSQTGQPLPCADLWLGNAKAVTELQQAQIVVQLGSSLTGKRLLQWQATCVPEEYWVIDNIEGRLDPAHHRGRRLVAKIADWLELHPAEKRKPWCVEIPRLAELAWQRVVAQRDTFGEAQLAHRIRDYLPEQGQLFVGNSLVVRLIDALSQLPAGYPVYSNRGASGIDGLLSTAAGVQRASAKSTLAIVGDLSALYDLNALALLRQVSAPFVLIVVNNNGGQIFSLLPTPQSKRERFYLMPQNVHFDHAAAMFNLRYHRPENWEELESALAGAWRTPATTVIELVVNDTDGAQTLQQLLAQVSHL.

This sequence belongs to the TPP enzyme family. MenD subfamily. In terms of assembly, homodimer. Mg(2+) is required as a cofactor. Requires Mn(2+) as cofactor. Thiamine diphosphate serves as cofactor.

It carries out the reaction isochorismate + 2-oxoglutarate + H(+) = 5-enolpyruvoyl-6-hydroxy-2-succinyl-cyclohex-3-ene-1-carboxylate + CO2. It participates in quinol/quinone metabolism; 1,4-dihydroxy-2-naphthoate biosynthesis; 1,4-dihydroxy-2-naphthoate from chorismate: step 2/7. The protein operates within quinol/quinone metabolism; menaquinone biosynthesis. Functionally, catalyzes the thiamine diphosphate-dependent decarboxylation of 2-oxoglutarate and the subsequent addition of the resulting succinic semialdehyde-thiamine pyrophosphate anion to isochorismate to yield 2-succinyl-5-enolpyruvyl-6-hydroxy-3-cyclohexene-1-carboxylate (SEPHCHC). The chain is 2-succinyl-5-enolpyruvyl-6-hydroxy-3-cyclohexene-1-carboxylate synthase from Salmonella typhi.